A 1163-amino-acid polypeptide reads, in one-letter code: Receptor-type guanylate cyclase gcy-21 (1163 aa).

The first 17 residues, Met1 to Asn17, serve as a signal peptide directing secretion. Residues Phe18–Thr490 are Extracellular-facing. N-linked (GlcNAc...) asparagine glycans are attached at residues Asn102, Asn296, Asn322, Asn346, Asn466, and Asn488. Residues Phe491–Phe511 form a helical membrane-spanning segment. At Leu512–Ser1163 the chain is on the cytoplasmic side. Residues Phe587–Thr882 enclose the Protein kinase domain. Residues Ala593–Ile601 and Lys635 contribute to the ATP site. Positions Thr901–Leu930 form a coiled coil. Residues Thr953 to Glu1083 enclose the Guanylate cyclase domain.

The protein belongs to the adenylyl cyclase class-4/guanylyl cyclase family. As to expression, expressed in ASG sensory neurons.

It is found in the cell membrane. The catalysed reaction is GTP = 3',5'-cyclic GMP + diphosphate. Guanylate cyclase involved in the production of the second messenger cGMP. Plays a role in dauer formation. This is Receptor-type guanylate cyclase gcy-21 from Caenorhabditis elegans.